The following is a 356-amino-acid chain: MHHQWLLLAACFWVIFMFMVASKFITLTFKDPDVYSAKQEFLFLTTMPEVRKLPEEKHIPEELKPTGKELPDSQLVQPLVYMERLELIRNVCRDDALKNLSHTPVSKFVLDRIFVCDKHKILFCQTPKVGNTQWKKVLIVLNGAFSSIEEIPENVVHDHEKNGLPRLSSFSDAEIQKRLKTYFKFFIVRDPFERLISAFKDKFVHNPRFEPWYRHEIAPGIIRKYRRNRTETRGIQFEDFVRYLGDPNHRWLDLQFGDHIIHWVTYVELCAPCEIMYSVIGHHETLEDDAPYILKEAGIDHLVSYPTIPPGITVYNRTKVEHYFLGISKRDIRRLYARFEGDFKLFGYQKPDFLLN.

Topologically, residues 1 to 6 are cytoplasmic; that stretch reads MHHQWL. The helical; Signal-anchor for type II membrane protein transmembrane segment at 7 to 27 threads the bilayer; the sequence is LLAACFWVIFMFMVASKFITL. The Lumenal portion of the chain corresponds to 28-356; the sequence is TFKDPDVYSA…GYQKPDFLLN (329 aa). Asparagine 99 carries N-linked (GlcNAc...) asparagine glycosylation. 3'-phosphoadenylyl sulfate contacts are provided by residues 127 to 133 and 189 to 197; these read PKVGNTQ and RDPFERLIS. 2 N-linked (GlcNAc...) asparagine glycosylation sites follow: asparagine 228 and asparagine 316.

It belongs to the sulfotransferase 2 family. As to expression, in fetal tissues, it is predominantly expressed in brain, and weakly expressed in lung, kidney and liver. In adult, it is highly expressed in brain, testis, ovary, expressed at intermediate level in heart, pancreas, skeletal muscle, spleen and thymus, and weakly expressed in other tissues. In brain, it is expressed at higher level in the frontal lobe.

It is found in the golgi apparatus membrane. It catalyses the reaction 3-O-{beta-D-GlcA-(1-&gt;[3)-alpha-D-Xyl-(1-&gt;3)-beta-D-GlcA-(1-&gt;](n)-4)-beta-D-Xyl-(1-&gt;4)-Rib-ol-P-Rib-ol-P-3-beta-D-GalNAc-(1-&gt;3)-beta-D-GlcNAc-(1-&gt;4)-O-6-P-alpha-D-Man}-L-Thr-[protein] + 3'-phosphoadenylyl sulfate = 3-O-{O-3-S-beta-D-GlcA-(1-&gt;[3)-alpha-D-Xyl-(1-&gt;3)-beta-D-GlcA-(1-&gt;](n)-4)-beta-D-Xyl-(1-&gt;4)-Rib-ol-P-Rib-ol-P-3-beta-D-GalNAc-(1-&gt;3)-beta-D-GlcNAc-(1-&gt;4)-O-6-P-alpha-D-Man}-L-Thr-[protein] + adenosine 3',5'-bisphosphate + H(+). The catalysed reaction is 17beta-estradiol 3-O-(beta-D-glucuronate) + 3'-phosphoadenylyl sulfate = 17beta-estradiol 3-O-(3-sulfo-beta-D-glucuronate) + adenosine 3',5'-bisphosphate + H(+). It carries out the reaction 17beta-estradiol 3-O-(beta-D-glucuronate) 17-sulfate + 3'-phosphoadenylyl sulfate = 17beta-estradiol 3-O-(3-sulfo-beta-D-glucuronate) 17-sulfate + adenosine 3',5'-bisphosphate + H(+). The enzyme catalyses 17beta-estradiol 17-O-(beta-D-glucuronate) + 3'-phosphoadenylyl sulfate = 17beta-estradiol 17-O-(3-sulfo-beta-D-glucuronate) + adenosine 3',5'-bisphosphate + H(+). It catalyses the reaction 16alpha,17beta-estriol 3-O-(beta-D-glucuronate) + 3'-phosphoadenylyl sulfate = 16alpha,17beta-estriol 3-O-(3-sulfo-beta-D-glucuronate) + adenosine 3',5'-bisphosphate + H(+). The catalysed reaction is 16alpha,17beta-estriol 16-O-(beta-D-glucuronate) + 3'-phosphoadenylyl sulfate = 16alpha,17beta-estriol 16-O-(3-sulfo-beta-D-glucuronate) + adenosine 3',5'-bisphosphate + H(+). It carries out the reaction 16alpha,17beta-estriol 17-O-(beta-D-glucuronate) + 3'-phosphoadenylyl sulfate = 16alpha,17beta-estriol 17-O-(3-sulfo-beta-D-glucuronate) + adenosine 3',5'-bisphosphate + H(+). The enzyme catalyses estrone 3-O-(beta-D-glucuronate) + 3'-phosphoadenylyl sulfate = estrone 3-O-(3-sulfo-beta-D-glucuronate) + adenosine 3',5'-bisphosphate + H(+). It catalyses the reaction 3alpha,20alpha-dihydroxy-5beta-pregnane 3-O-(beta-D-glucuronate) + 3'-phosphoadenylyl sulfate = 3alpha,20alpha-dihydroxy-5beta-pregnane 3-O-(3-sulfo-beta-D-glucuronate) + adenosine 3',5'-bisphosphate + H(+). The catalysed reaction is testosterone 17-O-(beta-D-glucuronate) + 3'-phosphoadenylyl sulfate = testosterone 17-O-(3-sulfo-beta-D-glucuronate) + adenosine 3',5'-bisphosphate + H(+). It carries out the reaction 3beta-androst-5-en-17-one 3-O-(beta-D-glucuronate) + 3'-phosphoadenylyl sulfate = 3beta-androst-5-en-17-one 3-O-(3-sulfo-beta-D-glucuronate) + adenosine 3',5'-bisphosphate + H(+). The enzyme catalyses 3alpha,17alpha-dihydroxy-5beta-androstane-11-one-17beta-carboxylate 3-O-(beta-D-glucuronate) + 3'-phosphoadenylyl sulfate = 3alpha,17alpha-dihydroxy-5beta-androstane-11-one-17beta-carboxylate 3-O-(3-sulfo-beta-D-glucuronate) + adenosine 3',5'-bisphosphate + H(+). It catalyses the reaction 3alpha-hydroxyetiocholan-17-one 3-O-(beta-D-glucuronate) + 3'-phosphoadenylyl sulfate = 3alpha-hydroxyetiocholan-17-one 3-O-(3-sulfo-beta-D-glucuronate) + adenosine 3',5'-bisphosphate + H(+). It functions in the pathway steroid metabolism. Its pathway is protein modification; carbohydrate sulfation. Catalyzes the transfer of sulfate from 3'-phosphoadenylyl sulfate (PAPS) to position 3 of terminal glucuronic acid of both protein- and lipid-linked oligosaccharides. Participates in biosynthesis of HNK-1 carbohydrate structure 3-O-sulfo-beta-D-GlcA-(1-&gt;3)-beta-D-Gal-(1-&gt;4)-D-GlcNAc-R, a sulfated glucuronyl-lactosaminyl residue carried by many neural recognition molecules, which is involved in cell interactions during ontogenetic development and in synaptic plasticity in the adult. May be indirectly involved in synapse plasticity of the hippocampus, via its role in HNK-1 biosynthesis. Sulfates terminal glucuronyl residue of the laminin globular (LG)-domain binding epitope on DAG1/alpha-dystroglycan and prevents further polymerization by LARGE1 glycosyltransferase. Likely defines the chain length of LG epitope, conferring binding specificity to extracellular matrix components. Plays a role in down-regulating the steroid hormones. Sulfates glucuronidated estrogens and androgens with an impact in hormone cycle and fertility. Has a preference for glucuronyl moiety at the 3-hydroxyl group of a sterol ring rather than the 17-hydroxyl group, showing high catalytic efficiency for 17beta-estradiol 3-O-(beta-D-glucuronate) and dehydroepiandrosterone 3-O-(beta-D-glucuronate) hormones. The protein is Carbohydrate sulfotransferase 10 of Homo sapiens (Human).